The sequence spans 158 residues: Protein-export protein SecB (158 aa).

Belongs to the SecB family. Homotetramer, a dimer of dimers. One homotetramer interacts with 1 SecA dimer.

It is found in the cytoplasm. Functionally, one of the proteins required for the normal export of preproteins out of the cell cytoplasm. It is a molecular chaperone that binds to a subset of precursor proteins, maintaining them in a translocation-competent state. It also specifically binds to its receptor SecA. The sequence is that of Protein-export protein SecB from Yersinia pestis (strain Pestoides F).